The chain runs to 352 residues: Histidinol-phosphate aminotransferase (352 aa).

Lysine 208 bears the N6-(pyridoxal phosphate)lysine mark.

It belongs to the class-II pyridoxal-phosphate-dependent aminotransferase family. Histidinol-phosphate aminotransferase subfamily. Homodimer. The cofactor is pyridoxal 5'-phosphate.

It carries out the reaction L-histidinol phosphate + 2-oxoglutarate = 3-(imidazol-4-yl)-2-oxopropyl phosphate + L-glutamate. It participates in amino-acid biosynthesis; L-histidine biosynthesis; L-histidine from 5-phospho-alpha-D-ribose 1-diphosphate: step 7/9. This Streptococcus sanguinis (strain SK36) protein is Histidinol-phosphate aminotransferase.